Here is a 257-residue protein sequence, read N- to C-terminus: MGCDVHDPSWQCQWGVPTIIVAWITCAALGIWCLAGSSADVSSGPGIAAVVGCSVFMIFLCAYLIRYREFFKDSVIDLLTCRWVRYCSCSCKCSCKCISGPCSRCCSACYKETMIYDMVQYGHRRRPGHGDDPDRVICEIVESPPVSAPTVFVPPPSEESHQPVIPPQPPTPTSEPKPKKGRAKDKPKGRPKNKPPCEPTVSSQPPSQPTAMPGGPPDASPPAMPQMPPGVAEAVQAAVQAAMAAALQQQQQHQTGT.

The next 2 helical transmembrane spans lie at 14–34 and 45–65; these read WGVP…IWCL and PGIA…AYLI. Positions 149-232 are disordered; sequence PTVFVPPPSE…AMPQMPPGVA (84 aa). The span at 164–175 shows a compositional bias: pro residues; sequence VIPPQPPTPTSE. Basic residues predominate over residues 179–193; that stretch reads KKGRAKDKPKGRPKN. Residues 214–228 show a composition bias toward pro residues; it reads GGPPDASPPAMPQMP.

It localises to the host Golgi apparatus membrane. The sequence is that of Protein UL133 (UL133) from Human cytomegalovirus (strain Merlin) (HHV-5).